Here is a 290-residue protein sequence, read N- to C-terminus: Enoyl-CoA hydratase, mitochondrial (290 aa).

Residues 1–27 constitute a mitochondrion transit peptide; the sequence is MAALRALLPRVRAPLRPWLFCPVQRSF. Substrate is bound by residues 98-101 and glycine 141; that span reads ADIK. Lysine 101 bears the N6-acetyllysine; alternate mark. Lysine 101 is modified (N6-succinyllysine; alternate). An N6-succinyllysine modification is found at lysine 204. N6-acetyllysine is present on lysine 211.

Belongs to the enoyl-CoA hydratase/isomerase family. In terms of assembly, homohexamer; dimer of trimers.

The protein resides in the mitochondrion matrix. It catalyses the reaction a (3S)-3-hydroxyacyl-CoA = a (2E)-enoyl-CoA + H2O. It carries out the reaction a (3E)-enoyl-CoA = a 4-saturated (2E)-enoyl-CoA. The enzyme catalyses (3E)-hexenoyl-CoA = (2E)-hexenoyl-CoA. The catalysed reaction is (3S)-3-hydroxybutanoyl-CoA = (2E)-butenoyl-CoA + H2O. It catalyses the reaction 3-hydroxyisovaleryl-CoA = 3-methylbut-2-enoyl-CoA + H2O. It carries out the reaction 3-hydroxypropanoyl-CoA = acryloyl-CoA + H2O. The enzyme catalyses 3-hydroxybutanoyl-CoA = (2E)-butenoyl-CoA + H2O. The catalysed reaction is 2-methylpropenoyl-CoA + H2O = (S)-3-hydroxyisobutanoyl-CoA. It catalyses the reaction (3S)-hydroxyhexanoyl-CoA = (2E)-hexenoyl-CoA + H2O. It carries out the reaction (3S)-hydroxydecanoyl-CoA = (2E)-decenoyl-CoA + H2O. The protein operates within lipid metabolism; fatty acid beta-oxidation. Its function is as follows. Converts unsaturated trans-2-enoyl-CoA species ((2E)-enoyl-CoA) to the corresponding 3(S)-3-hydroxyacyl-CoA species through addition of a water molecule to the double bond. Catalyzes the hydration of medium- and short-chained fatty enoyl-CoA thioesters from 4 carbons long (C4) up to C16. Has high substrate specificity for crotonyl-CoA ((2E)-butenoyl-CoA) and moderate specificity for acryloyl-CoA, 3-methylcrotonyl-CoA (3-methyl-(2E)-butenoyl-CoA) and methacrylyl-CoA ((2E)-2-methylpropenoyl-CoA). Can bind tiglyl-CoA (2-methylcrotonoyl-CoA), but hydrates only a small amount of this substrate. Plays a key role in the beta-oxidation spiral of short- and medium-chain fatty acid oxidation. At a lower rate than the hydratase reaction, catalyzes the isomerase reaction of trans-3-enoyl-CoA species (such as (3E)-hexenoyl-CoA) to trans-2-enoyl-CoA species (such as (2E)-hexenoyl-CoA), which are subsequently hydrated to 3(S)-3-hydroxyacyl-CoA species (such as (3S)-hydroxyhexanoyl-CoA). This Bos taurus (Bovine) protein is Enoyl-CoA hydratase, mitochondrial (ECHS1).